The sequence spans 394 residues: MNFEFGAKRRDPYAWLEQSLATIHRADWYRSVQPINGRPGATVVLAGQEVINFASNDYLGLAGDKRLMAAATAAIAEFGTGSTGSRLLSGHRELHRELEKAIASTKQTEDALVFSSGYLANLGAITALVGKRDLILSDQYNHSSLKNGAILSGAAVVEYPHCDVAVLKTQLSQQRQNYRRCLILTDTVFSMDGDLCPLPALFDLADEFSCMLLVDEAHATGVLGKTGAGCVEYFGCTGKQLIQIGTLSKALGSLGGYVAGSSALIDFLRNRAPSWIYTTGLSPADTAAALAAIKIVQQEPQHLAQLWRNIHYLKTLLQQLPNLKLLPSESPILCFQLPNATDALKAGKQLRDAGIFAPAIRPPTVPTSRIRISVMATHKVAHIEKLVAALKDVI.

R30 is a binding site for substrate. G117 to Y118 contributes to the pyridoxal 5'-phosphate binding site. H142 is a substrate binding site. Residues S190, D215–H218, and T246–K249 each bind pyridoxal 5'-phosphate. At K249 the chain carries N6-(pyridoxal phosphate)lysine. T364 lines the substrate pocket.

This sequence belongs to the class-II pyridoxal-phosphate-dependent aminotransferase family. BioF subfamily. Homodimer. Pyridoxal 5'-phosphate serves as cofactor.

The catalysed reaction is 6-carboxyhexanoyl-[ACP] + L-alanine + H(+) = (8S)-8-amino-7-oxononanoate + holo-[ACP] + CO2. It functions in the pathway cofactor biosynthesis; biotin biosynthesis. Catalyzes the decarboxylative condensation of pimeloyl-[acyl-carrier protein] and L-alanine to produce 8-amino-7-oxononanoate (AON), [acyl-carrier protein], and carbon dioxide. This chain is Putative 8-amino-7-oxononanoate synthase (bioF), found in Nostoc punctiforme (strain ATCC 29133 / PCC 73102).